A 727-amino-acid polypeptide reads, in one-letter code: NADH-ubiquinone oxidoreductase 75 kDa subunit, mitochondrial (727 aa).

Residues 1-23 constitute a mitochondrion transit peptide; it reads MLRIPVKRALIGLSKSPKGYVRS. In terms of domain architecture, 2Fe-2S ferredoxin-type spans 30–108; sequence NLIEVFVDGQ…GWNILTNSEK (79 aa). Cys64, Cys75, and Cys78 together coordinate [2Fe-2S] cluster. The residue at position 84 (Lys84) is an N6-acetyllysine. Cys92 serves as a coordination point for [2Fe-2S] cluster. One can recognise a 4Fe-4S His(Cys)3-ligated-type domain in the interval 108–147; the sequence is KSKKAREGVMEFLLANHPLDCPICDQGGECDLQDQSMMFG. Residues His124, Cys128, Cys131, Cys137, Cys176, Cys179, Cys182, and Cys226 each contribute to the [4Fe-4S] cluster site. In terms of domain architecture, 4Fe-4S Mo/W bis-MGD-type spans 245–301; the sequence is TRKTESIDVMDAVGSNIVVSTRTGEVMRILPRMHEDINEEWISDKTRFAYDGLKRQR. N6-acetyllysine is present on residues Lys499 and Lys709.

The protein belongs to the complex I 75 kDa subunit family. In terms of assembly, core subunit of respiratory chain NADH dehydrogenase (Complex I) which is composed of 45 different subunits. This is the largest subunit of complex I and it is a component of the iron-sulfur (IP) fragment of the enzyme. Complex I associates with ubiquinol-cytochrome reductase complex (Complex III) to form supercomplexes. Interacts with MDM2 and AKAP1. It depends on [2Fe-2S] cluster as a cofactor. Requires [4Fe-4S] cluster as cofactor.

Its subcellular location is the mitochondrion inner membrane. The catalysed reaction is a ubiquinone + NADH + 5 H(+)(in) = a ubiquinol + NAD(+) + 4 H(+)(out). Functionally, core subunit of the mitochondrial membrane respiratory chain NADH dehydrogenase (Complex I) which catalyzes electron transfer from NADH through the respiratory chain, using ubiquinone as an electron acceptor. Essential for catalysing the entry and efficient transfer of electrons within complex I. Plays a key role in the assembly and stability of complex I and participates in the association of complex I with ubiquinol-cytochrome reductase complex (Complex III) to form supercomplexes. The sequence is that of NADH-ubiquinone oxidoreductase 75 kDa subunit, mitochondrial (Ndufs1) from Rattus norvegicus (Rat).